Consider the following 190-residue polypeptide: UPF0232 protein SCO3875 (190 aa).

2 disordered regions span residues 1 to 70 (MSAD…GRDP) and 163 to 190 (GPGG…DTYG). The segment covering 26–35 (GVDLARVALR) has biased composition (low complexity). Residues 36–45 (AAREAARARG) are compositionally biased toward basic and acidic residues. Over residues 163–172 (GPGGPGGPGR) the composition is skewed to gly residues.

The protein belongs to the UPF0232 family.

In Streptomyces coelicolor (strain ATCC BAA-471 / A3(2) / M145), this protein is UPF0232 protein SCO3875.